The following is a 79-amino-acid chain: Large ribosomal subunit protein uL24 (79 aa).

Residues 1–29 (MPKLKKLLLKVSTSKPNTNPPSQNEEKGT) are disordered. Over residues 11–23 (VSTSKPNTNPPSQ) the composition is skewed to polar residues.

It belongs to the universal ribosomal protein uL24 family. Part of the 50S ribosomal subunit.

One of two assembly initiator proteins, it binds directly to the 5'-end of the 23S rRNA, where it nucleates assembly of the 50S subunit. Its function is as follows. One of the proteins that surrounds the polypeptide exit tunnel on the outside of the subunit. The protein is Large ribosomal subunit protein uL24 (rplX) of Onion yellows phytoplasma (strain OY-M).